Consider the following 224-residue polypeptide: Ribosomal RNA small subunit methyltransferase G (224 aa).

Residues Gly-69, Leu-74, 119–120 (AE), and Arg-137 each bind S-adenosyl-L-methionine.

The protein belongs to the methyltransferase superfamily. RNA methyltransferase RsmG family.

It is found in the cytoplasm. Specifically methylates the N7 position of guanine in position 518 of 16S rRNA. This chain is Ribosomal RNA small subunit methyltransferase G, found in Mycobacterium bovis (strain ATCC BAA-935 / AF2122/97).